Consider the following 649-residue polypeptide: Protein teflon (649 aa).

Residues Leu-33–His-56 form a C2H2-type 1 zinc finger. Positions Glu-78–Gln-126 are disordered. A compositionally biased stretch (low complexity) spans Ser-88–Ser-104. 2 consecutive C2H2-type zinc fingers follow at residues Tyr-599 to His-621 and Phe-625 to His-648.

It belongs to the Teflon family. Expressed at a low level in a variety of tissues, highest expression is in testis.

The protein localises to the nucleus. It is found in the chromosome. Specifically required in males for proper segregation of autosomal bivalents at meiosis I. Expression is required in the male germ line prior to spermatocyte stage S4. May have a role as a bridging molecule maintaining adhesion to hold autosome bivalents together via heterochromatic connections. This is Protein teflon from Drosophila melanogaster (Fruit fly).